The primary structure comprises 187 residues: UPF0301 protein YPO0936/y3322/YP_3506 (187 aa).

It belongs to the UPF0301 (AlgH) family.

The chain is UPF0301 protein YPO0936/y3322/YP_3506 from Yersinia pestis.